The following is a 359-amino-acid chain: GTPase Obg (359 aa).

Residues 1–159 form the Obg domain; the sequence is MQFIDQAEIQ…RSLRLELKLL (159 aa). The OBG-type G domain occupies 160-328; sequence AEVGIIGLPN…LLHQIWQELE (169 aa). GTP contacts are provided by residues 166 to 173, 191 to 195, 213 to 216, 280 to 283, and 309 to 311; these read GLPNAGKS, FTTLV, DIPG, NKID, and SAI. Mg(2+)-binding residues include S173 and T193.

Belongs to the TRAFAC class OBG-HflX-like GTPase superfamily. OBG GTPase family. Monomer. Requires Mg(2+) as cofactor.

The protein localises to the cytoplasm. Functionally, an essential GTPase which binds GTP, GDP and possibly (p)ppGpp with moderate affinity, with high nucleotide exchange rates and a fairly low GTP hydrolysis rate. Plays a role in control of the cell cycle, stress response, ribosome biogenesis and in those bacteria that undergo differentiation, in morphogenesis control. The sequence is that of GTPase Obg from Cyanothece sp. (strain PCC 7425 / ATCC 29141).